A 2211-amino-acid polypeptide reads, in one-letter code: Activating signal cointegrator 1 complex subunit 3 (2211 aa).

The Helicase ATP-binding 1 domain maps to E495 to L678. A508–T515 serves as a coordination point for ATP. The short motif at D620–H623 is the DEVH box element. In terms of domain architecture, Helicase C-terminal 1 spans V717–V923. Residues S987–F1296 form the SEC63 1 domain. One can recognise a Helicase ATP-binding 2 domain in the interval H1345–F1520. Residue A1358–T1365 participates in ATP binding. A DEIH box motif is present at residues D1462 to H1465. Residues P1553–M1760 form the Helicase C-terminal 2 domain. The SEC63 2 domain occupies P1821–I2184.

Belongs to the helicase family.

It is found in the nucleus. Its subcellular location is the nucleus speckle. The protein localises to the cytoplasm. The protein resides in the cytosol. It catalyses the reaction Couples ATP hydrolysis with the unwinding of duplex DNA by translocating in the 3'-5' direction.. The catalysed reaction is ATP + H2O = ADP + phosphate + H(+). In terms of biological role, 3'-5' DNA helicase involved in repair of alkylated DNA. Promotes DNA unwinding to generate single-stranded substrate needed for ALKBH3, enabling ALKBH3 to process alkylated N3-methylcytosine (3mC) within double-stranded regions. Also involved in activation of the ribosome quality control (RQC) pathway, a pathway that degrades nascent peptide chains during problematic translation. Drives the splitting of stalled ribosomes. In Gallus gallus (Chicken), this protein is Activating signal cointegrator 1 complex subunit 3 (ascc3).